The sequence spans 619 residues: Mitogen-activated protein kinase kinase kinase 2 (619 aa).

Disordered stretches follow at residues 25–44 (LSLQ…QNDV), 126–168 (QATN…PPPG), 201–245 (LDPL…DNHQ), and 289–355 (RTQG…APTN). The residue at position 26 (S26) is a Phosphoserine. Positions 43-122 (DVRVKFEHRG…KSLKILLVVN (80 aa)) constitute a PB1 domain. A compositionally biased stretch (polar residues) spans 126-143 (QATNLEPSPSPEDLNNTP). S153 and S164 each carry phosphoserine. The segment covering 203–219 (PLSLSSPENSGSGSCPS) has biased composition (low complexity). Phosphoserine occurs at positions 239, 297, 311, 331, 344, and 349. Positions 290-299 (TQGTSFRSPV) are enriched in polar residues. The span at 300–315 (SFSPTDHSLSTSSGSS) shows a compositional bias: low complexity. The span at 322-332 (DDSRIRRRGSD) shows a compositional bias: basic and acidic residues. The span at 336-346 (PTLTVTDISPP) shows a compositional bias: polar residues. Positions 356 to 616 (WRLGKLLGQG…AEELLRHMFV (261 aa)) constitute a Protein kinase domain. Residues 362-370 (LGQGAFGRV) and K385 contribute to the ATP site. D483 acts as the Proton acceptor in catalysis.

Belongs to the protein kinase superfamily. STE Ser/Thr protein kinase family. MAP kinase kinase kinase subfamily. In terms of assembly, self-associates. Binds both upstream activators and downstream substrates in multimolecular complexes. Interacts (via the kinase catalytic domain) with STK38. Interacts with XIAP/BIRC4. The cofactor is Mg(2+). Ubiquitination by XIAP/BIRC4 does not lead to proteasomal degradation. Post-translationally, autophosphorylated.

The protein resides in the cytoplasm. The protein localises to the nucleus. It carries out the reaction L-seryl-[protein] + ATP = O-phospho-L-seryl-[protein] + ADP + H(+). The enzyme catalyses L-threonyl-[protein] + ATP = O-phospho-L-threonyl-[protein] + ADP + H(+). With respect to regulation, activated by phosphorylation on Thr-524. Interacts with PKN2; the interaction activates PKN2 kinase activity in a MAP3K2-independent kinase activity. Component of a protein kinase signal transduction cascade. Regulates the JNK and ERK5 pathways by phosphorylating and activating MAP2K5 and MAP2K7. Plays a role in caveolae kiss-and-run dynamics. In Mus musculus (Mouse), this protein is Mitogen-activated protein kinase kinase kinase 2 (Map3k2).